Here is a 210-residue protein sequence, read N- to C-terminus: Orotate phosphoribosyltransferase (210 aa).

Residues R94, K98, H100, and 120–128 contribute to the 5-phospho-alpha-D-ribose 1-diphosphate site; that span reads EDLISTGGS. Residue S124 participates in orotate binding.

It belongs to the purine/pyrimidine phosphoribosyltransferase family. PyrE subfamily. As to quaternary structure, homodimer. Mg(2+) serves as cofactor.

The enzyme catalyses orotidine 5'-phosphate + diphosphate = orotate + 5-phospho-alpha-D-ribose 1-diphosphate. It participates in pyrimidine metabolism; UMP biosynthesis via de novo pathway; UMP from orotate: step 1/2. Catalyzes the transfer of a ribosyl phosphate group from 5-phosphoribose 1-diphosphate to orotate, leading to the formation of orotidine monophosphate (OMP). This is Orotate phosphoribosyltransferase from Bacillus cereus (strain G9842).